We begin with the raw amino-acid sequence, 421 residues long: Gamma-glutamyl phosphate reductase (421 aa).

The protein belongs to the gamma-glutamyl phosphate reductase family.

Its subcellular location is the cytoplasm. It carries out the reaction L-glutamate 5-semialdehyde + phosphate + NADP(+) = L-glutamyl 5-phosphate + NADPH + H(+). It participates in amino-acid biosynthesis; L-proline biosynthesis; L-glutamate 5-semialdehyde from L-glutamate: step 2/2. In terms of biological role, catalyzes the NADPH-dependent reduction of L-glutamate 5-phosphate into L-glutamate 5-semialdehyde and phosphate. The product spontaneously undergoes cyclization to form 1-pyrroline-5-carboxylate. This chain is Gamma-glutamyl phosphate reductase, found in Bordetella petrii (strain ATCC BAA-461 / DSM 12804 / CCUG 43448).